A 406-amino-acid chain; its full sequence is Bifunctional enzyme IspD/IspF (406 aa).

A 2-C-methyl-D-erythritol 4-phosphate cytidylyltransferase region spans residues 1–247; it reads MSLIRVNGEA…TLFFNPAKDT (247 aa). Residues 248–406 form a 2-C-methyl-D-erythritol 2,4-cyclodiphosphate synthase region; the sequence is FIGMGFDTHA…HVSMRYKQKL (159 aa). The a divalent metal cation site is built by aspartate 254 and histidine 256. 4-CDP-2-C-methyl-D-erythritol 2-phosphate-binding positions include 254–256 and 280–281; these read DTH and HS. Residue histidine 288 coordinates a divalent metal cation. 4-CDP-2-C-methyl-D-erythritol 2-phosphate-binding positions include 302–304, 307–311, 378–381, phenylalanine 385, and lysine 388; these read DIG, FPDND, and TTME.

This sequence in the N-terminal section; belongs to the IspD/TarI cytidylyltransferase family. IspD subfamily. The protein in the C-terminal section; belongs to the IspF family. A divalent metal cation is required as a cofactor.

The catalysed reaction is 2-C-methyl-D-erythritol 4-phosphate + CTP + H(+) = 4-CDP-2-C-methyl-D-erythritol + diphosphate. The enzyme catalyses 4-CDP-2-C-methyl-D-erythritol 2-phosphate = 2-C-methyl-D-erythritol 2,4-cyclic diphosphate + CMP. It functions in the pathway isoprenoid biosynthesis; isopentenyl diphosphate biosynthesis via DXP pathway; isopentenyl diphosphate from 1-deoxy-D-xylulose 5-phosphate: step 2/6. The protein operates within isoprenoid biosynthesis; isopentenyl diphosphate biosynthesis via DXP pathway; isopentenyl diphosphate from 1-deoxy-D-xylulose 5-phosphate: step 4/6. Functionally, bifunctional enzyme that catalyzes the formation of 4-diphosphocytidyl-2-C-methyl-D-erythritol from CTP and 2-C-methyl-D-erythritol 4-phosphate (MEP) (IspD), and catalyzes the conversion of 4-diphosphocytidyl-2-C-methyl-D-erythritol 2-phosphate (CDP-ME2P) to 2-C-methyl-D-erythritol 2,4-cyclodiphosphate (ME-CPP) with a corresponding release of cytidine 5-monophosphate (CMP) (IspF). In Helicobacter pylori (strain ATCC 700392 / 26695) (Campylobacter pylori), this protein is Bifunctional enzyme IspD/IspF.